The following is a 353-amino-acid chain: Alanine racemase (353 aa).

The Proton acceptor; specific for D-alanine role is filled by Lys-33. The residue at position 33 (Lys-33) is an N6-(pyridoxal phosphate)lysine. Residue Arg-129 participates in substrate binding. Tyr-250 functions as the Proton acceptor; specific for L-alanine in the catalytic mechanism. Position 298 (Met-298) interacts with substrate.

Belongs to the alanine racemase family. Requires pyridoxal 5'-phosphate as cofactor.

The catalysed reaction is L-alanine = D-alanine. It participates in amino-acid biosynthesis; D-alanine biosynthesis; D-alanine from L-alanine: step 1/1. Functionally, catalyzes the interconversion of L-alanine and D-alanine. May also act on other amino acids. The sequence is that of Alanine racemase (alr) from Aromatoleum aromaticum (strain DSM 19018 / LMG 30748 / EbN1) (Azoarcus sp. (strain EbN1)).